Reading from the N-terminus, the 81-residue chain is Short neurotoxin 1 (81 aa).

An N-terminal signal peptide occupies residues 1-21; the sequence is MKTLLLTLVVVTIVCLDLGYT. Cystine bridges form between Cys24–Cys43, Cys38–Cys60, Cys62–Cys73, and Cys74–Cys79.

Belongs to the three-finger toxin family. Short-chain subfamily. Type I alpha-neurotoxin sub-subfamily. As to expression, expressed by the venom gland.

It is found in the secreted. Its function is as follows. Binds to muscle nicotinic acetylcholine receptor (nAChR) and inhibit acetylcholine from binding to the receptor, thereby impairing neuromuscular transmission. This Cryptophis nigrescens (Eastern small-eyed snake) protein is Short neurotoxin 1.